The sequence spans 322 residues: Beta-ketoacyl-[acyl-carrier-protein] synthase III (322 aa).

Active-site residues include Cys113 and His249. The tract at residues 250 to 254 (QANLR) is ACP-binding. The active site involves Asn279.

Belongs to the thiolase-like superfamily. FabH family. Homodimer.

It is found in the cytoplasm. The enzyme catalyses malonyl-[ACP] + acetyl-CoA + H(+) = 3-oxobutanoyl-[ACP] + CO2 + CoA. The protein operates within lipid metabolism; fatty acid biosynthesis. Its function is as follows. Catalyzes the condensation reaction of fatty acid synthesis by the addition to an acyl acceptor of two carbons from malonyl-ACP. Catalyzes the first condensation reaction which initiates fatty acid synthesis and may therefore play a role in governing the total rate of fatty acid production. Possesses both acetoacetyl-ACP synthase and acetyl transacylase activities. Its substrate specificity determines the biosynthesis of branched-chain and/or straight-chain of fatty acids. This chain is Beta-ketoacyl-[acyl-carrier-protein] synthase III, found in Granulibacter bethesdensis (strain ATCC BAA-1260 / CGDNIH1).